The chain runs to 204 residues: 3-isopropylmalate dehydratase small subunit (204 aa).

This sequence belongs to the LeuD family. LeuD type 1 subfamily. As to quaternary structure, heterodimer of LeuC and LeuD.

It carries out the reaction (2R,3S)-3-isopropylmalate = (2S)-2-isopropylmalate. Its pathway is amino-acid biosynthesis; L-leucine biosynthesis; L-leucine from 3-methyl-2-oxobutanoate: step 2/4. Its function is as follows. Catalyzes the isomerization between 2-isopropylmalate and 3-isopropylmalate, via the formation of 2-isopropylmaleate. This is 3-isopropylmalate dehydratase small subunit from Clavibacter michiganensis subsp. michiganensis (strain NCPPB 382).